Reading from the N-terminus, the 872-residue chain is Translation initiation factor IF-2 (872 aa).

The span at 130 to 155 shows a compositional bias: basic and acidic residues; sequence AEEEAARAAEEEAARLAEEEAARRAA. The tract at residues 130-282 is disordered; the sequence is AEEEAARAAE…RERERLKHMQ (153 aa). Positions 156–181 are enriched in low complexity; the sequence is EPQSEPEAAAPAAEPVAPTAPVAAAP. Over residues 182–194 the composition is skewed to pro residues; it reads APAPATPVAPAQP. Residues 195 to 211 are compositionally biased toward low complexity; it reads KPVAAAAPAGDATAVPR. Over residues 271-282 the composition is skewed to basic and acidic residues; sequence RARERERLKHMQ. The region spanning 371-539 is the tr-type G domain; that stretch reads TRPPVVTVMG…AILLQAEILD (169 aa). A G1 region spans residues 380–387; sequence GHVDHGKT. A GTP-binding site is contributed by 380-387; it reads GHVDHGKT. Residues 405 to 409 are G2; the sequence is GITQH. Positions 427–430 are G3; the sequence is DTPG. Residues 427–431 and 481–484 each bind GTP; these read DTPGH and NKID. Positions 481-484 are G4; that stretch reads NKID. Positions 517 to 519 are G5; the sequence is SAK.

This sequence belongs to the TRAFAC class translation factor GTPase superfamily. Classic translation factor GTPase family. IF-2 subfamily.

It is found in the cytoplasm. One of the essential components for the initiation of protein synthesis. Protects formylmethionyl-tRNA from spontaneous hydrolysis and promotes its binding to the 30S ribosomal subunits. Also involved in the hydrolysis of GTP during the formation of the 70S ribosomal complex. The chain is Translation initiation factor IF-2 from Paramagnetospirillum magneticum (strain ATCC 700264 / AMB-1) (Magnetospirillum magneticum).